A 262-amino-acid polypeptide reads, in one-letter code: Glucosamine-6-phosphate deaminase (262 aa).

Asp63 serves as the catalytic Proton acceptor; for enolization step. The active-site For ring-opening step is Asn129. The active-site Proton acceptor; for ring-opening step is the His131. The active-site For ring-opening step is Glu136.

It belongs to the glucosamine/galactosamine-6-phosphate isomerase family. NagB subfamily.

The catalysed reaction is alpha-D-glucosamine 6-phosphate + H2O = beta-D-fructose 6-phosphate + NH4(+). It functions in the pathway amino-sugar metabolism; N-acetylneuraminate degradation; D-fructose 6-phosphate from N-acetylneuraminate: step 5/5. Functionally, catalyzes the reversible isomerization-deamination of glucosamine 6-phosphate (GlcN6P) to form fructose 6-phosphate (Fru6P) and ammonium ion. In Bacillus cereus (strain B4264), this protein is Glucosamine-6-phosphate deaminase.